A 503-amino-acid polypeptide reads, in one-letter code: Puromycin resistance protein pur8 (503 aa).

Topologically, residues 1-24 (MARKPDISAVPVESAACQGPDPRR) are cytoplasmic. Residues 25–45 (WWGLVVILAAQLLVVLDGTVV) traverse the membrane as a helical segment. The Extracellular portion of the chain corresponds to 46–64 (NIALPSVQRDLGMSDTSRQ). A helical membrane pass occupies residues 65 to 85 (WVITAYTLAFGGLLLLGGRVA). Residues 86 to 92 (DAFGRRR) are Cytoplasmic-facing. Residues 93–113 (IFAVGILGFGLASLLGGAAPD) form a helical membrane-spanning segment. The Extracellular portion of the chain corresponds to 114 to 122 (PGTLFLARA). A helical transmembrane segment spans residues 123–143 (LQGVFAAALAPAALALINTLF). Topologically, residues 144-152 (TEPGERGKA) are cytoplasmic. Residues 153 to 173 (FGVYGAVSGGGAAVGLLAGGL) traverse the membrane as a helical segment. Residues 174-181 (LTEYLDWR) lie on the Extracellular side of the membrane. Residues 182 to 202 (WCLYVNAPVALLALLGCRLLP) traverse the membrane as a helical segment. The Cytoplasmic portion of the chain corresponds to 203 to 212 (RDRRTGRAVR). Residues 213-233 (LDLPGTLLGCGGLVAIVYAFA) form a helical membrane-spanning segment. The Extracellular segment spans residues 234–241 (EAESGWGD). Residues 242 to 262 (PLVVRLLVLGVLMLVAFALVE) traverse the membrane as a helical segment. Residues 263–280 (RRVQDPLLPPGVVAHRVR) lie on the Cytoplasmic side of the membrane. A helical membrane pass occupies residues 281–301 (GGSFLVVGLPQIGLFGLFLFL). Residues 302 to 313 (TYYLQGILDYSP) are Extracellular-facing. A helical transmembrane segment spans residues 314 to 334 (VLTGVAFLPLGLGIAVGSSLI). The Cytoplasmic portion of the chain corresponds to 335 to 346 (AARLLPRTRPRT). The helical transmembrane segment at 347–367 (LIVGALLAAAAGMALLTRLEP) threads the bilayer. Over 368–371 (DTPQ) the chain is Extracellular. Residues 372–392 (VYLTHLLPAQILIGLGIGCMM) form a helical membrane-spanning segment. Topologically, residues 393 to 422 (MPAMHTATARVAPHEAGAAAAVVNSAQQVG) are cytoplasmic. A helical transmembrane segment spans residues 423–443 (GALGVALLNTVSTGATAAYLA). The Extracellular segment spans residues 444–461 (DHGTSPAATVDGTVHGYT). A helical transmembrane segment spans residues 462–482 (VAIAFAVGVLLLTAVLAWVLI). Residues 483-503 (DSRTEAADETGSASVTPARPR) are Cytoplasmic-facing.

It belongs to the major facilitator superfamily. EmrB family.

Its subcellular location is the cell membrane. May be involved in active puromycin efflux energized by a proton-dependent electrochemical gradient. In addition, it could be implicated in secreting N-acetylpuromycin, the last intermediate of the puromycin biosynthesis pathway, to the environment. This chain is Puromycin resistance protein pur8 (pur8), found in Streptomyces alboniger.